Consider the following 461-residue polypeptide: tRNA modification GTPase MnmE (461 aa).

(6S)-5-formyl-5,6,7,8-tetrahydrofolate-binding residues include arginine 23, glutamate 88, and arginine 127. The TrmE-type G domain occupies glycine 223 to phenylalanine 383. Asparagine 233 is a binding site for K(+). Residues asparagine 233 to serine 238, threonine 252 to threonine 258, and aspartate 277 to glycine 280 contribute to the GTP site. Mg(2+) is bound at residue serine 237. Residues threonine 252, isoleucine 254, and threonine 257 each contribute to the K(+) site. Residue threonine 258 participates in Mg(2+) binding. Lysine 461 is a (6S)-5-formyl-5,6,7,8-tetrahydrofolate binding site.

Belongs to the TRAFAC class TrmE-Era-EngA-EngB-Septin-like GTPase superfamily. TrmE GTPase family. In terms of assembly, homodimer. Heterotetramer of two MnmE and two MnmG subunits. Requires K(+) as cofactor.

The protein resides in the cytoplasm. Exhibits a very high intrinsic GTPase hydrolysis rate. Involved in the addition of a carboxymethylaminomethyl (cmnm) group at the wobble position (U34) of certain tRNAs, forming tRNA-cmnm(5)s(2)U34. This Clostridium botulinum (strain Loch Maree / Type A3) protein is tRNA modification GTPase MnmE.